A 795-amino-acid chain; its full sequence is Protocadherin beta-5 (795 aa).

The first 30 residues, 1–30, serve as a signal peptide directing secretion; sequence METALAKTPQKRQVMFLAILLLLWEAGSEA. At 31-689 the chain is on the extracellular side; it reads VRYSIPEETE…AQADSLTVYL (659 aa). 5 consecutive Cadherin domains span residues 35–133, 138–242, 247–346, 351–450, and 455–560; these read IPEE…APEF, MLLK…APEF, YEVQ…APEL, LSSP…APAF, and YTLF…SPFV. Asn-169 is a glycosylation site (N-linked (GlcNAc...) asparagine). The residue at position 296 (Lys-296) is an N6-acetyllysine. N-linked (GlcNAc...) asparagine glycosylation is found at Asn-417 and Asn-435. Asn-566 carries N-linked (GlcNAc...) asparagine glycosylation. One can recognise a Cadherin 6 domain in the interval 567–670; the sequence is GSAPCTELVP…LVDGFSQPYL (104 aa). A helical membrane pass occupies residues 690–710; it reads VVALASVSSLFLFSVLLFVAV. At 711–795 the chain is on the cytoplasmic side; sequence RLCRRSRAAP…AAFRNSFGLN (85 aa).

Its subcellular location is the cell membrane. In terms of biological role, potential calcium-dependent cell-adhesion protein. May be involved in the establishment and maintenance of specific neuronal connections in the brain. The chain is Protocadherin beta-5 (PCDHB5) from Homo sapiens (Human).